The primary structure comprises 138 residues: Transcriptional activator protein Pur-alpha (138 aa).

Phosphoserine is present on Ser70.

This sequence belongs to the PUR DNA-binding protein family. As to quaternary structure, homodimer, heterodimer with PURB and heterotrimer with PURB and YBX1/Y-box protein 1. Interacts with FMR1; this interaction occurs in association with polyribosome.

It is found in the nucleus. This is a probable transcription activator that specifically binds the purine-rich single strand of the PUR element located upstream of the c-Myc gene. May play a role in the initiation of DNA replication and in recombination. The protein is Transcriptional activator protein Pur-alpha of Rattus norvegicus (Rat).